Here is a 215-residue protein sequence, read N- to C-terminus: Large ribosomal subunit protein uL3 (215 aa).

At Gln151 the chain carries N5-methylglutamine.

It belongs to the universal ribosomal protein uL3 family. In terms of assembly, part of the 50S ribosomal subunit. Forms a cluster with proteins L14 and L19. Post-translationally, methylated by PrmB.

In terms of biological role, one of the primary rRNA binding proteins, it binds directly near the 3'-end of the 23S rRNA, where it nucleates assembly of the 50S subunit. This is Large ribosomal subunit protein uL3 from Rickettsia massiliae (strain Mtu5).